The primary structure comprises 192 residues: Adenylate kinase (192 aa).

10–18 (GVPGVGKTT) contacts ATP.

It belongs to the archaeal adenylate kinase family.

The protein resides in the cytoplasm. It catalyses the reaction AMP + ATP = 2 ADP. This Methanoculleus marisnigri (strain ATCC 35101 / DSM 1498 / JR1) protein is Adenylate kinase.